A 201-amino-acid chain; its full sequence is HTH-type transcriptional regulator Hpr (201 aa).

The region spanning 13 to 157 (AMLFSQRIAQ…MMCIIRNIYG (145 aa)) is the HTH marR-type domain. Residues 63–86 (ISEIAKFGVMHVSTAFNFSKKLEE) constitute a DNA-binding region (H-T-H motif).

As to quaternary structure, homodimer.

Negative regulator of protease production and sporulation. The polypeptide is HTH-type transcriptional regulator Hpr (Geobacillus sp. (strain WCH70)).